The following is a 243-amino-acid chain: Pyridoxine 5'-phosphate synthase (243 aa).

A 3-amino-2-oxopropyl phosphate-binding site is contributed by asparagine 9. Residue 11–12 participates in 1-deoxy-D-xylulose 5-phosphate binding; it reads DH. Arginine 20 serves as a coordination point for 3-amino-2-oxopropyl phosphate. Histidine 45 acts as the Proton acceptor in catalysis. 2 residues coordinate 1-deoxy-D-xylulose 5-phosphate: arginine 47 and histidine 52. Catalysis depends on glutamate 72, which acts as the Proton acceptor. 1-deoxy-D-xylulose 5-phosphate is bound at residue threonine 102. Catalysis depends on histidine 193, which acts as the Proton donor. Residues glycine 194 and 215 to 216 contribute to the 3-amino-2-oxopropyl phosphate site; that span reads GH.

This sequence belongs to the PNP synthase family. Homooctamer; tetramer of dimers.

It is found in the cytoplasm. The catalysed reaction is 3-amino-2-oxopropyl phosphate + 1-deoxy-D-xylulose 5-phosphate = pyridoxine 5'-phosphate + phosphate + 2 H2O + H(+). The protein operates within cofactor biosynthesis; pyridoxine 5'-phosphate biosynthesis; pyridoxine 5'-phosphate from D-erythrose 4-phosphate: step 5/5. Its function is as follows. Catalyzes the complicated ring closure reaction between the two acyclic compounds 1-deoxy-D-xylulose-5-phosphate (DXP) and 3-amino-2-oxopropyl phosphate (1-amino-acetone-3-phosphate or AAP) to form pyridoxine 5'-phosphate (PNP) and inorganic phosphate. This chain is Pyridoxine 5'-phosphate synthase, found in Photobacterium profundum (strain SS9).